We begin with the raw amino-acid sequence, 819 residues long: Advillin (819 aa).

A core region spans residues 1-731 (MSLSSAFRTV…YEQLKNELGD (731 aa)). The Gelsolin-like 1 repeat unit spans residues 24–105 (MELVLVPLSA…VQYHESDTFR (82 aa)). Position 85 is a phosphotyrosine (tyrosine 85). Residues 109-116 (KRGIIYKK) and 135-143 (RLLHVKGKR) each bind a 1,2-diacyl-sn-glycero-3-phospho-(1D-myo-inositol-4,5-bisphosphate). Gelsolin-like repeat units follow at residues 144–215 (NIRA…KEAA), 265–339 (TEVA…SAMF), 407–486 (LVPV…RHFM), 524–592 (NTKA…PEFW), and 631–704 (TEVT…PPTF). Positions 628–819 (FLVTEVTDFT…LQLKKEAGLF (192 aa)) are required for interaction with F-actin. The segment at 731–819 (DATAIVRITT…LQLKKEAGLF (89 aa)) is headpiece. Residues 753–819 (ESGPKYYPVE…LQLKKEAGLF (67 aa)) form the HP domain. Tyrosine 758 is modified (phosphotyrosine).

This sequence belongs to the villin/gelsolin family. In terms of assembly, associates (via C-terminus) with actin. Interacts with F-actin. Interacts with SCARF1; the interaction occurs in embryonic dorsal root ganglions at 18 dpc and induces neurite-like outgrowth. Interacts with PLCE1. Interacts with ACTR2 and ACTR3; associates with the ARP2/3 complex. Expressed in dorsal root ganglion (DRG) neurons and superior cervical ganglia (SCG). Expressed in podocytes.

The protein localises to the cytoplasm. It localises to the cytoskeleton. The protein resides in the cell projection. It is found in the neuron projection. Its subcellular location is the axon. The protein localises to the lamellipodium. It localises to the cell junction. The protein resides in the focal adhesion. Ca(2+)-regulated actin-binding protein which plays an important role in actin bundling. May have a unique function in the morphogenesis of neuronal cells which form ganglia. Required for SREC1-mediated regulation of neurite-like outgrowth. Plays a role in regenerative sensory axon outgrowth and remodeling processes after peripheral injury in neonates. Involved in the formation of long fine actin-containing filopodia-like structures in fibroblast. Plays a role in ciliogenesis. In podocytes, controls lamellipodia formation through the regulation of EGF-induced diacylglycerol generation by PLCE1 and ARP2/3 complex assembly. This is Advillin from Rattus norvegicus (Rat).